A 552-amino-acid polypeptide reads, in one-letter code: Probable beta-glucosidase btgE (552 aa).

The N-terminal stretch at 1–18 (MRGAILATAAALAGTAMA) is a signal peptide. Positions 250 to 291 (EPTSAPAAPSTTAVPATTTAAVPSTSSAAPSSSSTAPASTGA) are disordered. The span at 251-289 (PTSAPAAPSTTAVPATTTAAVPSTSSAAPSSSSTAPAST) shows a compositional bias: low complexity. Catalysis depends on Glu-392, which acts as the Proton donor. The active-site Nucleophile is the Glu-488.

It belongs to the glycosyl hydrolase 17 family.

The protein resides in the secreted. Its subcellular location is the cell wall. The enzyme catalyses Hydrolysis of terminal, non-reducing beta-D-glucosyl residues with release of beta-D-glucose.. The protein operates within glycan metabolism; cellulose degradation. In terms of biological role, beta-glucosidases are one of a number of cellulolytic enzymes involved in the degradation of cellulosic biomass. Catalyzes the last step releasing glucose from the inhibitory cellobiose. The chain is Probable beta-glucosidase btgE (btgE) from Neosartorya fischeri (strain ATCC 1020 / DSM 3700 / CBS 544.65 / FGSC A1164 / JCM 1740 / NRRL 181 / WB 181) (Aspergillus fischerianus).